Consider the following 239-residue polypeptide: Ribonuclease P protein component 3 (239 aa).

This sequence belongs to the eukaryotic/archaeal RNase P protein component 3 family. As to quaternary structure, consists of a catalytic RNA component and at least 4-5 protein subunits.

The protein localises to the cytoplasm. It catalyses the reaction Endonucleolytic cleavage of RNA, removing 5'-extranucleotides from tRNA precursor.. Part of ribonuclease P, a protein complex that generates mature tRNA molecules by cleaving their 5'-ends. The polypeptide is Ribonuclease P protein component 3 (Methanosarcina barkeri (strain Fusaro / DSM 804)).